The following is a 189-amino-acid chain: uncharacterized protein (189 aa).

Basic and acidic residues predominate over residues 1–15; sequence MDKHGVKTPLWRKEV. Residues 1-77 are disordered; the sequence is MDKHGVKTPL…SPLRQESSSQ (77 aa). 2 stretches are compositionally biased toward acidic residues: residues 16-29 and 46-56; these read EDPE…EDDS and SATETEEDSRD. Over residues 65–77 the composition is skewed to polar residues; it reads VSYSPLRQESSSQ.

This is an uncharacterized protein from Mus musculus (Mouse).